An 88-amino-acid chain; its full sequence is Large ribosomal subunit protein bL27 (88 aa).

A disordered region spans residues 1 to 25; that stretch reads MAHKKAGGSSRNGRDSPGQRRGIKR.

Belongs to the bacterial ribosomal protein bL27 family.

The chain is Large ribosomal subunit protein bL27 (rpmA) from Lawsonia intracellularis.